Consider the following 206-residue polypeptide: Ribosomal RNA large subunit methyltransferase E (206 aa).

S-adenosyl-L-methionine-binding residues include Gly-60, Trp-62, Asp-80, Asp-96, and Asp-121. Catalysis depends on Lys-161, which acts as the Proton acceptor.

It belongs to the class I-like SAM-binding methyltransferase superfamily. RNA methyltransferase RlmE family.

The protein localises to the cytoplasm. The catalysed reaction is uridine(2552) in 23S rRNA + S-adenosyl-L-methionine = 2'-O-methyluridine(2552) in 23S rRNA + S-adenosyl-L-homocysteine + H(+). Specifically methylates the uridine in position 2552 of 23S rRNA at the 2'-O position of the ribose in the fully assembled 50S ribosomal subunit. This chain is Ribosomal RNA large subunit methyltransferase E, found in Francisella tularensis subsp. holarctica (strain FTNF002-00 / FTA).